The primary structure comprises 433 residues: Glutamate-1-semialdehyde 2,1-aminomutase (433 aa).

Lysine 271 carries the post-translational modification N6-(pyridoxal phosphate)lysine.

This sequence belongs to the class-III pyridoxal-phosphate-dependent aminotransferase family. HemL subfamily. As to quaternary structure, homodimer. It depends on pyridoxal 5'-phosphate as a cofactor.

The protein localises to the cytoplasm. It carries out the reaction (S)-4-amino-5-oxopentanoate = 5-aminolevulinate. It participates in porphyrin-containing compound metabolism; protoporphyrin-IX biosynthesis; 5-aminolevulinate from L-glutamyl-tRNA(Glu): step 2/2. It functions in the pathway porphyrin-containing compound metabolism; chlorophyll biosynthesis. In Prochlorococcus marinus (strain MIT 9515), this protein is Glutamate-1-semialdehyde 2,1-aminomutase.